Reading from the N-terminus, the 472-residue chain is Argininosuccinate lyase (472 aa).

Belongs to the lyase 1 family. Argininosuccinate lyase subfamily.

The protein localises to the cytoplasm. It carries out the reaction 2-(N(omega)-L-arginino)succinate = fumarate + L-arginine. The protein operates within amino-acid biosynthesis; L-arginine biosynthesis; L-arginine from L-ornithine and carbamoyl phosphate: step 3/3. The sequence is that of Argininosuccinate lyase from Syntrophus aciditrophicus (strain SB).